We begin with the raw amino-acid sequence, 137 residues long: Protein Turandot X (137 aa).

Residues 1–24 (MRVPVFQLSCLLGLIVCLLCSVKA) form the signal peptide.

The protein belongs to the Turandot family.

Its subcellular location is the secreted. A humoral factor that may play a role in stress tolerance. This is Protein Turandot X from Drosophila pseudoobscura pseudoobscura (Fruit fly).